The following is a 150-amino-acid chain: Transcription antitermination protein NusB (150 aa).

Belongs to the NusB family.

Involved in transcription antitermination. Required for transcription of ribosomal RNA (rRNA) genes. Binds specifically to the boxA antiterminator sequence of the ribosomal RNA (rrn) operons. The chain is Transcription antitermination protein NusB from Streptococcus pyogenes serotype M6 (strain ATCC BAA-946 / MGAS10394).